The primary structure comprises 196 residues: MCTGKCARFVGLSLIPLSLVCIVANALLLVPNGQTTWTKDHLSLQVWLMAGFVGGGLMVLCPGISAVRAGGKGCCGAGCCGNRCRMLRSVFCSAIGLLGAIYCLSVSGTGLRIGPQCLMNGSWDYHFQDTAGSYLLNRTQWNLCVEPPDVVLWNVTLFSLLVAASCLEILLCGVQLVNASIGVLCGDCRKKQGSSQ.

Residues 1 to 9 (MCTGKCARF) are Cytoplasmic-facing. The chain crosses the membrane as a helical span at residues 10 to 30 (VGLSLIPLSLVCIVANALLLV). The Extracellular segment spans residues 31 to 45 (PNGQTTWTKDHLSLQ). A helical membrane pass occupies residues 46-66 (VWLMAGFVGGGLMVLCPGISA). The Cytoplasmic portion of the chain corresponds to 67–89 (VRAGGKGCCGAGCCGNRCRMLRS). A helical transmembrane segment spans residues 90 to 110 (VFCSAIGLLGAIYCLSVSGTG). Positions 90–196 (VFCSAIGLLG…DCRKKQGSSQ (107 aa)) are interaction with MTOR and CASTOR1. At 111–156 (LRIGPQCLMNGSWDYHFQDTAGSYLLNRTQWNLCVEPPDVVLWNVT) the chain is on the extracellular side. Asparagine 120 carries N-linked (GlcNAc...) asparagine glycosylation. Residue 123–128 (WDYHFQ) coordinates L-arginine. 2 N-linked (GlcNAc...) asparagine glycosylation sites follow: asparagine 137 and asparagine 154. The chain crosses the membrane as a helical span at residues 157–177 (LFSLLVAASCLEILLCGVQLV). At 178 to 196 (NASIGVLCGDCRKKQGSSQ) the chain is on the cytoplasmic side.

The protein belongs to the L6 tetraspanin family. As to quaternary structure, interacts with MTOR; the interaction is positively regulated by arginine and is negatively regulated by leucine. Interacts with SLC38A9. Interacts with SLC7A1; the interaction is negatively regulated by arginine. Interacts with CASTOR1; the interaction is positively regulated by leucine and is negatively regulated by arginine.

Its subcellular location is the lysosome membrane. It is found in the cell membrane. Acts as a lysosomal membrane arginine sensor. Forms a complex with MTOR and SLC38A9 on lysosomal membranes in an arginine-regulated manner, leading to arginine efflux which enables the activation of mTORC1 which subsequently leads to RPS6KB1 and EIF4EBP1 phosphorylations. Facilitates cell cycle G1/S phase progression and the translocation of the CDK4-CCND1 complex into the nucleus. CDKN1B and RHOA/ROCK signaling activity are involved in TM4SF5-mediated acceleration of G1/S phase progression. This chain is Transmembrane 4 L6 family member 5 (TM4SF5), found in Bos taurus (Bovine).